We begin with the raw amino-acid sequence, 238 residues long: Leucyl/phenylalanyl-tRNA--protein transferase (238 aa).

It belongs to the L/F-transferase family.

It is found in the cytoplasm. The enzyme catalyses N-terminal L-lysyl-[protein] + L-leucyl-tRNA(Leu) = N-terminal L-leucyl-L-lysyl-[protein] + tRNA(Leu) + H(+). The catalysed reaction is N-terminal L-arginyl-[protein] + L-leucyl-tRNA(Leu) = N-terminal L-leucyl-L-arginyl-[protein] + tRNA(Leu) + H(+). It catalyses the reaction L-phenylalanyl-tRNA(Phe) + an N-terminal L-alpha-aminoacyl-[protein] = an N-terminal L-phenylalanyl-L-alpha-aminoacyl-[protein] + tRNA(Phe). In terms of biological role, functions in the N-end rule pathway of protein degradation where it conjugates Leu, Phe and, less efficiently, Met from aminoacyl-tRNAs to the N-termini of proteins containing an N-terminal arginine or lysine. The protein is Leucyl/phenylalanyl-tRNA--protein transferase of Psychromonas ingrahamii (strain DSM 17664 / CCUG 51855 / 37).